The following is a 382-amino-acid chain: Anhydro-N-acetylmuramic acid kinase (382 aa).

9–16 (GTSLDGID) is a binding site for ATP.

This sequence belongs to the anhydro-N-acetylmuramic acid kinase family.

The enzyme catalyses 1,6-anhydro-N-acetyl-beta-muramate + ATP + H2O = N-acetyl-D-muramate 6-phosphate + ADP + H(+). It participates in amino-sugar metabolism; 1,6-anhydro-N-acetylmuramate degradation. Its pathway is cell wall biogenesis; peptidoglycan recycling. Its function is as follows. Catalyzes the specific phosphorylation of 1,6-anhydro-N-acetylmuramic acid (anhMurNAc) with the simultaneous cleavage of the 1,6-anhydro ring, generating MurNAc-6-P. Is required for the utilization of anhMurNAc either imported from the medium or derived from its own cell wall murein, and thus plays a role in cell wall recycling. This Bacillus cereus (strain ZK / E33L) protein is Anhydro-N-acetylmuramic acid kinase.